The sequence spans 489 residues: uncharacterized protein (489 aa).

Thr26 carries the post-translational modification Phosphothreonine. Residue Ser27 is modified to Phosphoserine. The next 3 helical transmembrane spans lie at 63–83, 182–202, and 221–241; these read IVYL…IEFA, LVWS…ILCA, and VFKL…IAFL. 3 disordered regions span residues 260 to 312, 401 to 435, and 450 to 489; these read PKTS…APLE, STLL…VPPS, and PSIN…PVVH. At Ser263 the chain carries Phosphoserine. Residues 268–282 show a composition bias toward polar residues; the sequence is QRGTSSSQPSENDAN. A compositionally biased stretch (polar residues) spans 450–465; sequence PSINNVGGSTAPSVNN. Residues 477–489 show a composition bias toward low complexity; that stretch reads SRSSTLTERPVVH.

Its subcellular location is the endoplasmic reticulum membrane. This is an uncharacterized protein from Schizosaccharomyces pombe (strain 972 / ATCC 24843) (Fission yeast).